The sequence spans 329 residues: Transcription factor TGA2.3 (329 aa).

A disordered region spans residues 1-48; the sequence is MADMSPRTDTSTDDTDDNHMLEPGQLALAAASDSDRSKDKHEDQKTLR. Residues 33–46 show a composition bias toward basic and acidic residues; sequence DSDRSKDKHEDQKT. Positions 43–87 constitute a bZIP domain; it reads DQKTLRRLAQNREAARKSRLRKKAYVQQLENSRLKLTQLEQELQR. Residues 45-65 are basic motif; the sequence is KTLRRLAQNREAARKSRLRKK. The leucine-zipper stretch occupies residues 71-85; sequence LENSRLKLTQLEQEL. Positions 110 to 326 constitute a DOG1 domain; it reads ALAFDMEYAR…RALSSLWLAR (217 aa).

Belongs to the bZIP family. As to quaternary structure, interacts with NPR1/NH1 and NPR3/NH3.

The protein localises to the nucleus. In terms of biological role, transcriptional regulator involved in defense response. The sequence is that of Transcription factor TGA2.3 from Oryza sativa subsp. japonica (Rice).